The chain runs to 44 residues: Small ribosomal subunit protein eS31 (44 aa).

Residues Cys18, Cys21, Cys35, and Cys38 each contribute to the Zn(2+) site. Residues 18–38 (CPRCGDTFLAAHDDRQVCGRC) form a C4-type zinc finger.

The protein belongs to the eukaryotic ribosomal protein eS31 family. As to quaternary structure, part of the 30S ribosomal subunit. The cofactor is Zn(2+).

This Halobacterium salinarum (strain ATCC 29341 / DSM 671 / R1) protein is Small ribosomal subunit protein eS31.